We begin with the raw amino-acid sequence, 311 residues long: Aspartate carbamoyltransferase catalytic subunit (311 aa).

Positions 55 and 56 each coordinate carbamoyl phosphate. Lys-85 contacts L-aspartate. Carbamoyl phosphate-binding residues include Arg-106, His-135, and Gln-138. The L-aspartate site is built by Arg-168 and Arg-230. 2 residues coordinate carbamoyl phosphate: Leu-268 and Pro-269.

The protein belongs to the aspartate/ornithine carbamoyltransferase superfamily. ATCase family. Heterododecamer (2C3:3R2) of six catalytic PyrB chains organized as two trimers (C3), and six regulatory PyrI chains organized as three dimers (R2).

The catalysed reaction is carbamoyl phosphate + L-aspartate = N-carbamoyl-L-aspartate + phosphate + H(+). Its pathway is pyrimidine metabolism; UMP biosynthesis via de novo pathway; (S)-dihydroorotate from bicarbonate: step 2/3. Catalyzes the condensation of carbamoyl phosphate and aspartate to form carbamoyl aspartate and inorganic phosphate, the committed step in the de novo pyrimidine nucleotide biosynthesis pathway. This chain is Aspartate carbamoyltransferase catalytic subunit, found in Escherichia coli (strain 55989 / EAEC).